A 1052-amino-acid polypeptide reads, in one-letter code: MDSSLLQAIEEIEKFFQHLSERHTEQAETPDAPEPQNCMPLTAHAEESQHESTQSKTMPPLGSTMMTSACTNIPGTVLTQDLTMHPLKALEDLSETYSMGQKVTSFDQVKHTAGSQMTDVTVTPKSSPTDCQKTTITASNMTISNESSQLNTPSSDQTLNESQIPALLGDQMKTLSDNQTLCGDQVTFSSDQTLTDGHTVTSGSDETLSGGQMTTSLDLYGGQMMTSIDNQTLCGEQMTTSSGNQAFYGRQMTTSTGNQTLCGEQMTTSTGNQALYGGQMTTSASNQTLCGEQMTTSTSNQTLCGEQVMTSTGNQALCGGQMTTSTGNQNLYGGQMMTSTGNQTLYWGQMMTSTGNQNLCGEQVMTSTGNQALCGGQMTTSTGNQNLYGGQMMTSTGNQTLYWGQMMTSTGNQNLCGEQVMTSTGNQALCGGQMTTSTGNQNLCGEQVMTSTSNQTLCGEQTTTSTSNQTLCGEQVTTSTGNQALYGGQMMTSTGNQTLYWGQMMTSTGNQNLCGEQMTTSTGNQALYGGQMTTSTSNQTLCGEQMTTPTSNQTLCGEQVTTSTGNQALYGGQITTSTSNQTLCGEQMTTSTSNQTLCGEQVTTSTGNQALYGGQMMTSTGNQALYGGQMTTSASNQTLCGEQMTTSTSNQTLCEEQVMTSTGNQALCGEQMTTSTGNQALYGGQMTTSTSNQTLCGEQTTTSTSNQTLCGEQVTTSTGNQALYGGQMMTSTGNQTLYWGQMMTSTGNQNLCGEQMTTSTGNQALYGGQMTTSTSNQTLCGEQMTTPTSNQTLCGEQVTTSTGNQALYRGQITTSTSNQTLCGEQMTTSTSNQTLCGEQVTTSTGNQALYGGQMMTSTGNQNLYGGQNMTSTDNQALYGGQMATYSGNQTLYGDQMLTLQVGNMTTLTDDHSLYGGYMMSHQFSSLPYPGFLCFSSSHLIQGQLPKQKTQSCQFWKNPEVSRPYVCTYEDCKMSYSKACHLRTHMRKHTGEKPYVCDVEGCTWKFARSDELNRHKKRHTGERPYLCSICSKNFARSDHLKQHAKVHNIRPGL.

3 consecutive C2H2-type zinc fingers follow at residues 964–988 (YVCT…MRKH), 994–1018 (YVCD…KKRH), and 1024–1046 (YLCS…AKVH).

The protein belongs to the krueppel C2H2-type zinc-finger protein family.

It is found in the nucleus. This Homo sapiens (Human) protein is Kruppel-like factor 18.